The chain runs to 128 residues: Large ribosomal subunit protein bL12 (128 aa).

Belongs to the bacterial ribosomal protein bL12 family. As to quaternary structure, homodimer. Part of the ribosomal stalk of the 50S ribosomal subunit. Forms a multimeric L10(L12)X complex, where L10 forms an elongated spine to which 2 to 4 L12 dimers bind in a sequential fashion. Binds GTP-bound translation factors.

In terms of biological role, forms part of the ribosomal stalk which helps the ribosome interact with GTP-bound translation factors. Is thus essential for accurate translation. This Synechocystis sp. (strain ATCC 27184 / PCC 6803 / Kazusa) protein is Large ribosomal subunit protein bL12.